The following is a 348-amino-acid chain: DNA-directed RNA polymerase subunit alpha (348 aa).

The tract at residues 1–243 is alpha N-terminal domain (alpha-NTD); that stretch reads MLIKQGDRLI…DQISVFINFD (243 aa). The tract at residues 260-348 is alpha C-terminal domain (alpha-CTD); the sequence is VNENLFKGID…WLKRKQQNEA (89 aa).

This sequence belongs to the RNA polymerase alpha chain family. Homodimer. The RNAP catalytic core consists of 2 alpha, 1 beta, 1 beta' and 1 omega subunit. When a sigma factor is associated with the core the holoenzyme is formed, which can initiate transcription.

It carries out the reaction RNA(n) + a ribonucleoside 5'-triphosphate = RNA(n+1) + diphosphate. Its function is as follows. DNA-dependent RNA polymerase catalyzes the transcription of DNA into RNA using the four ribonucleoside triphosphates as substrates. In Oleidesulfovibrio alaskensis (strain ATCC BAA-1058 / DSM 17464 / G20) (Desulfovibrio alaskensis), this protein is DNA-directed RNA polymerase subunit alpha.